Here is a 604-residue protein sequence, read N- to C-terminus: Glucose oxidase 2 (604 aa).

The signal sequence occupies residues 1–16; it reads MKLLGLLSGLVVVATA. FAD contacts are provided by L49 and T50. An N-linked (GlcNAc...) asparagine glycan is attached at N63. Position 70 (E70) interacts with FAD. N109 carries an N-linked (GlcNAc...) asparagine glycan. The FAD site is built by S123, N127, G128, and S130. A disulfide bridge links C184 with C226. N214 is a glycosylation site (N-linked (GlcNAc...) asparagine). Position 270 (V270) interacts with FAD. 3 N-linked (GlcNAc...) asparagine glycosylation sites follow: N375, N408, and N517. Catalysis depends on H536, which acts as the Proton acceptor. The O2 site is built by R557 and V558. FAD is bound by residues G569 and M581. The N-linked (GlcNAc...) asparagine glycan is linked to N600.

It belongs to the GMC oxidoreductase family. As to quaternary structure, homodimer. FAD is required as a cofactor.

Its subcellular location is the secreted. The protein resides in the cell wall. It is found in the cytoplasm. The protein localises to the extracellular space. It localises to the extracellular matrix. It carries out the reaction beta-D-glucose + O2 = D-glucono-1,5-lactone + H2O2. In terms of biological role, glucose oxidase catalyzes the oxidation of beta-D-glucose to D-glucono-delta-lactone and hydrogen peroxide in the presence of molecular oxygen. D-glucono-delta-lactone is sequentially hydrolyzed by lactonase to D-gluconic acid, and the resulting hydrogen peroxide is hydrolyzed by catalase to oxygen and water. Acts as a key factor contributing to fungal disease of apple. The production of gluconic acid leads to host tissue acidification that enhances the expression of pectolytic enzymes and the establishment of conditions for necrotrophic development of P.expansum. The sequence is that of Glucose oxidase 2 from Penicillium expansum (Blue mold rot fungus).